Reading from the N-terminus, the 1097-residue chain is Mitochondrial distribution and morphology protein 34 (1097 aa).

The SMP-LTD domain maps to 1 to 198; the sequence is MSFNFKWPTF…LPGIIHRLSQ (198 aa). 8 disordered regions span residues 204–305, 317–343, 390–427, 480–520, 556–600, 645–675, 716–817, and 923–1097; these read EAKS…PLHS, AAFP…SGFS, QSDD…LDAV, DDQP…TSSL, PEVD…SSRT, LDAE…RDLS, GQNA…SPGV, and GSSA…AIRE. Residues 205–229 are compositionally biased toward basic and acidic residues; sequence AKSEKDKVKQKAEAEEPPARSREPT. Residues 252-263 show a composition bias toward basic residues; the sequence is RKSHSKAKKHSR. Residues 274 to 283 are compositionally biased toward low complexity; sequence SPCQSPQRPR. Positions 284–293 are enriched in basic residues; sequence QSPRRPRHVA. A compositionally biased stretch (basic and acidic residues) spans 406 to 416; it reads SSSHDGKHDEG. Low complexity-rich tracts occupy residues 508–519 and 572–586; these read SSRSDRSACTSS and GGTP…RFGS. A compositionally biased stretch (polar residues) spans 662 to 675; the sequence is TNPTSRESSYRDLS. Low complexity predominate over residues 759–779; that stretch reads GMSATPARTRASAAASARSRP. Residues 784–796 are compositionally biased toward polar residues; it reads YATSPPGDSSGWQ. Over residues 923 to 943 the composition is skewed to low complexity; it reads GSSAASGTGTTSGSSQTGANA. Residues 1004–1024 are compositionally biased toward polar residues; that stretch reads SNKPNNTSTGQGEDSQDNSAA. Residues 1045–1059 show a composition bias toward low complexity; the sequence is ASGSSASSAITDSSS.

It belongs to the MDM34 family. Component of the ER-mitochondria encounter structure (ERMES) or MDM complex, composed of MMM1, MDM10, MDM12 and MDM34.

It localises to the mitochondrion outer membrane. Functionally, component of the ERMES/MDM complex, which serves as a molecular tether to connect the endoplasmic reticulum (ER) and mitochondria. Components of this complex are involved in the control of mitochondrial shape and protein biogenesis, and function in nonvesicular lipid trafficking between the ER and mitochondria. MDM34 is required for the interaction of the ER-resident membrane protein MMM1 and the outer mitochondrial membrane-resident beta-barrel protein MDM10. The chain is Mitochondrial distribution and morphology protein 34 from Mycosarcoma maydis (Corn smut fungus).